The following is a 426-amino-acid chain: Coiled-coil domain-containing protein 86 (426 aa).

A disordered region spans residues 1 to 426; the sequence is MDTPLRRSRR…QPPQRPVAKV (426 aa). Ser-18 is modified (phosphoserine). Over residues 33–49 the composition is skewed to basic and acidic residues; the sequence is ALVDFKSNSEETGELKS. Pro residues predominate over residues 55–145; it reads LSLPSPGPQP…SLPSPGPQPE (91 aa). Residue Ser-59 is modified to Phosphoserine. Thr-66 carries the phosphothreonine modification. Phosphoserine occurs at positions 67, 70, 161, 172, 183, 191, 194, 225, 252, 253, and 283. Residues 241–255 are compositionally biased toward polar residues; sequence QPAQELTVQAPSSPE. Residues 304 to 320 are compositionally biased toward basic residues; sequence GKPKSGRVWKDRSKKRF. Residues 339–383 are compositionally biased toward basic and acidic residues; that stretch reads ERQERKLAKDFARHLEEEKQRRRQEKKERRAENLRRRLENERKAE. The stretch at 346-389 forms a coiled coil; the sequence is AKDFARHLEEEKQRRRQEKKERRAENLRRRLENERKAEIVQVIR. The segment covering 392–402 has biased composition (basic residues); it reads AKLKKAKKKQL. At Arg-408 the chain carries Citrulline.

In terms of processing, citrullinated by PADI4. Highly expressed in testis. Also expressed in heart, liver, kidney.

The protein resides in the nucleus. The protein localises to the chromosome. It is found in the nucleolus. Required for proper chromosome segregation during mitosis and error-free mitotic progression. This is Coiled-coil domain-containing protein 86 from Mus musculus (Mouse).